The following is a 69-amino-acid chain: Putative membrane protein insertion efficiency factor (69 aa).

Belongs to the UPF0161 family.

It is found in the cell inner membrane. Could be involved in insertion of integral membrane proteins into the membrane. This Magnetococcus marinus (strain ATCC BAA-1437 / JCM 17883 / MC-1) protein is Putative membrane protein insertion efficiency factor.